The following is a 339-amino-acid chain: Uroporphyrinogen decarboxylase (339 aa).

Substrate contacts are provided by residues 21 to 25 (RQAGR), aspartate 71, tyrosine 147, serine 202, and histidine 315.

Belongs to the uroporphyrinogen decarboxylase family. As to quaternary structure, homodimer.

Its subcellular location is the cytoplasm. It carries out the reaction uroporphyrinogen III + 4 H(+) = coproporphyrinogen III + 4 CO2. It participates in porphyrin-containing compound metabolism; protoporphyrin-IX biosynthesis; coproporphyrinogen-III from 5-aminolevulinate: step 4/4. In terms of biological role, catalyzes the decarboxylation of four acetate groups of uroporphyrinogen-III to yield coproporphyrinogen-III. The sequence is that of Uroporphyrinogen decarboxylase from Helicobacter pylori (strain HPAG1).